The chain runs to 436 residues: GTPase Der (436 aa).

EngA-type G domains follow at residues P4–E167 and I176–K351. GTP-binding positions include G10–S17, D57–I61, N119–D122, G182–S189, D229–M233, and N294–D297. The KH-like domain maps to K352–N436.

The protein belongs to the TRAFAC class TrmE-Era-EngA-EngB-Septin-like GTPase superfamily. EngA (Der) GTPase family. Associates with the 50S ribosomal subunit.

GTPase that plays an essential role in the late steps of ribosome biogenesis. This chain is GTPase Der, found in Staphylococcus carnosus (strain TM300).